Here is a 636-residue protein sequence, read N- to C-terminus: MASIEEIAHQIIEQQMGEISRSQPEISQTALMDGTTQRIQLVPSESSVSVPQRIQIVTDPQTGQKIQIVTALDQSGASKQFILTNNDGSLPSKVILTRQDSSQGKVYLTTPDAAGVNQLFISTPDVPAQHIQILSDTQCLDQNLNKQLVELCVVCGDKASGRHYGAVTCEGCKGFFKRSIRKNLVYTCRGSKDCVINKHYRNRCQYCRLQRCIALGMKQDSVQCERKPIEVSREKSSNCAASTEKIYIRKDLRSPLAATTTFVTENKTSRTTSLLDSGMLVNIQQSGVKNESILITPNKVDACQGDLSTLANVVTSLANLNKSKELPQTNTELSIIESLSNGDSSLSELAQDDQSNSEVTRAFDTLAKALNQSENSAQGSSECVGSNSNLTDANVEIEGPLLSDAHIAFRLTMPSPMPEYLNVHYICESASRLLFLSMHWARSIPSFQSLGQENSISLVKACWNELFSLGLAQCCQVMNVETILAAFVNHLHNSMQHDKLSADKVKLVMDHIFKLQEFCNSMVKLSVDGYEYAYLKAIALFSPDHPGLENVSHIEKLQEKAYMEFQDYVTKTYPEDTYRLSRLLLRLPALRLLNAAITEELFFAGLIGNVQIDSIIPYILRMETSDYNSQIIGLTV.

The nuclear receptor DNA-binding region spans 149–224; sequence VELCVVCGDK…LGMKQDSVQC (76 aa). 2 NR C4-type zinc fingers span residues 152 to 172 and 188 to 207; these read CVVC…CEGC and CRGS…CQYC. The NR LBD domain maps to 382–623; it reads ECVGSNSNLT…SIIPYILRME (242 aa).

Belongs to the nuclear hormone receptor family. NR2 subfamily.

Its subcellular location is the nucleus. In terms of biological role, orphan nuclear receptor. Binds the IR7 element in the promoter of its own gene in an autoregulatory negative feedback mechanism. Primarily repressor of a broad range of genes. Binds to hormone response elements (HREs) consisting of two 5'-AGGTCA-3' half site direct repeat consensus sequences. This is Nuclear receptor subfamily 2 group C member 1 from Xenopus tropicalis (Western clawed frog).